The chain runs to 430 residues: Asparagine--tRNA ligase (430 aa).

Belongs to the class-II aminoacyl-tRNA synthetase family. Homodimer.

It localises to the cytoplasm. The catalysed reaction is tRNA(Asn) + L-asparagine + ATP = L-asparaginyl-tRNA(Asn) + AMP + diphosphate + H(+). The protein is Asparagine--tRNA ligase of Staphylococcus saprophyticus subsp. saprophyticus (strain ATCC 15305 / DSM 20229 / NCIMB 8711 / NCTC 7292 / S-41).